We begin with the raw amino-acid sequence, 480 residues long: RuvB-like helicase 2 (480 aa).

76-83 (GPPSTGKT) is a binding site for ATP.

It belongs to the RuvB family. In terms of assembly, may form heterododecamers with RVB1. Component of the SWR1 chromatin remodeling complex, the INO80 chromatin remodeling complex, and of the R2TP complex.

It localises to the nucleus. It catalyses the reaction ATP + H2O = ADP + phosphate + H(+). DNA helicase which participates in several chromatin remodeling complexes, including the SWR1 and the INO80 complexes. The SWR1 complex mediates the ATP-dependent exchange of histone H2A for the H2A variant HZT1 leading to transcriptional regulation of selected genes by chromatin remodeling. The INO80 complex remodels chromatin by shifting nucleosomes and is involved in DNA repair. Also involved in pre-rRNA processing. In Debaryomyces hansenii (strain ATCC 36239 / CBS 767 / BCRC 21394 / JCM 1990 / NBRC 0083 / IGC 2968) (Yeast), this protein is RuvB-like helicase 2 (RVB2).